The chain runs to 141 residues: uncharacterized protein (141 aa).

This is an uncharacterized protein from Saccharomyces cerevisiae (strain ATCC 204508 / S288c) (Baker's yeast).